A 212-amino-acid polypeptide reads, in one-letter code: Methylthioribulose-1-phosphate dehydratase (212 aa).

Positions 98 and 100 each coordinate Zn(2+).

The protein belongs to the aldolase class II family. MtnB subfamily. The cofactor is Zn(2+).

The enzyme catalyses 5-(methylsulfanyl)-D-ribulose 1-phosphate = 5-methylsulfanyl-2,3-dioxopentyl phosphate + H2O. It participates in amino-acid biosynthesis; L-methionine biosynthesis via salvage pathway; L-methionine from S-methyl-5-thio-alpha-D-ribose 1-phosphate: step 2/6. In terms of biological role, catalyzes the dehydration of methylthioribulose-1-phosphate (MTRu-1-P) into 2,3-diketo-5-methylthiopentyl-1-phosphate (DK-MTP-1-P). The chain is Methylthioribulose-1-phosphate dehydratase from Picosynechococcus sp. (strain ATCC 27264 / PCC 7002 / PR-6) (Agmenellum quadruplicatum).